A 264-amino-acid polypeptide reads, in one-letter code: Acyl-[acyl-carrier-protein]--UDP-N-acetylglucosamine O-acyltransferase (264 aa).

It belongs to the transferase hexapeptide repeat family. LpxA subfamily. As to quaternary structure, homotrimer.

The protein localises to the cytoplasm. It catalyses the reaction a (3R)-hydroxyacyl-[ACP] + UDP-N-acetyl-alpha-D-glucosamine = a UDP-3-O-[(3R)-3-hydroxyacyl]-N-acetyl-alpha-D-glucosamine + holo-[ACP]. It participates in glycolipid biosynthesis; lipid IV(A) biosynthesis; lipid IV(A) from (3R)-3-hydroxytetradecanoyl-[acyl-carrier-protein] and UDP-N-acetyl-alpha-D-glucosamine: step 1/6. Involved in the biosynthesis of lipid A, a phosphorylated glycolipid that anchors the lipopolysaccharide to the outer membrane of the cell. This is Acyl-[acyl-carrier-protein]--UDP-N-acetylglucosamine O-acyltransferase from Rickettsia africae (strain ESF-5).